Here is a 770-residue protein sequence, read N- to C-terminus: Protein PAT1 homolog 1 (770 aa).

The tract at residues Met1–Val42 is disordered. A region A; interaction with DDX6/RCK region spans residues Met1–Glu84. An involved in nuclear foci localization region spans residues Met1–Arg397. Residues Leu7–Asn33 are compositionally biased toward acidic residues. The segment at Asn85–His388 is region N; interaction with decapping machinery. Positions Leu86 to Ile95 match the Nuclear export signal motif. The disordered stretch occupies residues Pro155–Pro195. The residue at position 177 (Ser177) is a Phosphoserine. Thr178 carries the phosphothreonine modification. Phosphoserine occurs at positions 179 and 184. Thr194 carries the phosphothreonine modification. An asymmetric dimethylarginine mark is found at Arg217, Arg223, and Arg263. The segment at Arg223–Arg397 is involved in RNA-binding. At Ser278 the chain carries Phosphoserine. The residue at position 284 (Arg284) is an Asymmetric dimethylarginine. 2 disordered regions span residues Phe319–Leu340 and His376–Leu396. Over residues Ala321–Gly337 the composition is skewed to pro residues. Omega-N-methylarginine is present on Arg385. Positions Arg385–Leu396 are enriched in basic and acidic residues. The tract at residues Gln389–Glu448 is region H. Positions Lys398–Arg770 are involved in nuclear speckle localization. Residues Ile449–Arg770 form a region C region.

Belongs to the PAT1 family. As to quaternary structure, interacts (via region A) with DDX6/RCK. Interacts (via region H and region C) with LSM1 and LSM4. Interacts (via region N) with DCP1A, DCP2, EDC3, EDC4 and XRN1. Interacts with the CCR4-NOT complex. Interacts with the Lsm-containing SMN-Sm protein complex. Interacts with EIF4ENIF1/4E-T.

The protein resides in the cytoplasm. Its subcellular location is the P-body. It localises to the nucleus. It is found in the PML body. The protein localises to the nucleus speckle. Its function is as follows. RNA-binding protein involved in deadenylation-dependent decapping of mRNAs, leading to the degradation of mRNAs. Acts as a scaffold protein that connects deadenylation and decapping machinery. Required for cytoplasmic mRNA processing body (P-body) assembly. In Mus musculus (Mouse), this protein is Protein PAT1 homolog 1 (Patl1).